The primary structure comprises 294 residues: Signal peptidase I (294 aa).

The segment at 1 to 59 (MTETTDSPSERQPGPAEPELSSRDPDIAGQVFDAAPFDAAPDADSEGDSKAAKTDEPRP) is disordered. The Cytoplasmic portion of the chain corresponds to 1–66 (MTETTDSPSE…PRPAKRSTLR (66 aa)). The span at 47–59 (GDSKAAKTDEPRP) shows a compositional bias: basic and acidic residues. The helical transmembrane segment at 67–87 (EFAVLAVIAVVLYYVMLTFVA) threads the bilayer. Residues 88–294 (RPYLIPSESM…VRSVNPQQGR (207 aa)) lie on the Extracellular side of the membrane. Catalysis depends on residues Ser-96 and Lys-174.

This sequence belongs to the peptidase S26 family.

It is found in the cell membrane. The catalysed reaction is Cleavage of hydrophobic, N-terminal signal or leader sequences from secreted and periplasmic proteins.. This is Signal peptidase I (lepB) from Mycobacterium tuberculosis (strain CDC 1551 / Oshkosh).